A 450-amino-acid polypeptide reads, in one-letter code: MKATKITYKKDPMGLTPAQIVNELNRFIVGQEKAKKAVAIALRNRCRRKRVEGNLRNEIVPKNILMIGSTGVGKTEIARRLAKLTNSPFYKIEATKFTEVGYVGRDVESIIRDLVEIAVNTEKTLAKTEVDINAREKAIERILDSLVGKTSSSETREKFKEKVLNGELNDTEIEISVADTAPIGGGSFEIPGMPGSSMGVLNLGDMIGRALGSSKTKTKKMLVKEAMAIIIPEELEKLIDQEKIIQQAITLAENDGIVFIDEIDKIASAPSSGAKNAEISREGVQRDLLPLIEGTTVNTKYGQVKTDHILFIASGAFHIAKPSDLLPELQGRLPIRVELNSLTKDDMIKILLEPETSLIKQYSALIGTEDVHLEFTASAIEKIADYAITVNLEVEDIGARRLHTILENLLEDISFEASEMKGKKITIDDQFVENQLSKIITNLDLAKFIL.

Residues V29, G71 to E76, D261, E328, and R400 contribute to the ATP site.

It belongs to the ClpX chaperone family. HslU subfamily. A double ring-shaped homohexamer of HslV is capped on each side by a ring-shaped HslU homohexamer. The assembly of the HslU/HslV complex is dependent on binding of ATP.

It is found in the cytoplasm. Functionally, ATPase subunit of a proteasome-like degradation complex; this subunit has chaperone activity. The binding of ATP and its subsequent hydrolysis by HslU are essential for unfolding of protein substrates subsequently hydrolyzed by HslV. HslU recognizes the N-terminal part of its protein substrates and unfolds these before they are guided to HslV for hydrolysis. This is ATP-dependent protease ATPase subunit HslU from Rickettsia canadensis (strain McKiel).